Here is a 631-residue protein sequence, read N- to C-terminus: Eukaryotic translation initiation factor 2-alpha kinase 1 (631 aa).

Residues 1–34 (MQGGNSGVRKREEEGGGEGAVAAPPAIDFPAESS) are disordered. The SIFI-degron signature appears at 85 to 104 (LRSRQVFKLLCQTFIKMGLL). Residues 167-583 (FEEVAILGKG…AVQLLQSELF (417 aa)) form the Protein kinase domain. Residues 173-181 (LGKGGYGRV) and lysine 196 each bind ATP. The interval 260-301 (QEEDREQYDVKNDESSSSSIVFAEPTPEKGKRFGESDTENQN) is disordered. A Phosphothreonine modification is found at threonine 285. Positions 285-301 (TPEKGKRFGESDTENQN) are enriched in basic and acidic residues. The HRM 1 repeat unit spans residues 410–415 (ACPYVM). The active-site Proton acceptor is aspartate 442. Threonine 486 and threonine 488 each carry phosphothreonine; by autocatalysis. A Phosphothreonine modification is found at threonine 493. The HRM 2 repeat unit spans residues 552-557 (RCPVQA).

This sequence belongs to the protein kinase superfamily. Ser/Thr protein kinase family. GCN2 subfamily. Synthesized in an inactive form that binds to the N-terminal domain of CDC37. Has to be associated with a multiprotein complex containing Hsp90, CDC37 and PPP5C for maturation and activation by autophosphorylation. The phosphatase PPP5C modulates this activation. Homodimer; homodimerizes in presence of heme, forming a disulfide-linked inactive homodimer. Interacts with DELE1; binds both to full-length DELE1 and processed form of DELE1 (S-DELE1) in response to stress, leading to activate its protein kinase activity and trigger the integrated stress response (ISR). In terms of processing, activated by autophosphorylation; phosphorylated predominantly on serine and threonine residues, but also on tyrosine residues. Autophosphorylation at Thr-488 is required for kinase activation. The active autophosphorylated form apparently is largely refractory to cellular heme fluctuations. Ubiquitinated and degraded by the SIFI complex once the mitochondrial stress has been resolved, thereby providing stress response silencing. Within the SIFI complex, UBR4 initiates ubiquitin chain that are further elongated or branched by KCMF1.

It localises to the cytoplasm. The enzyme catalyses L-seryl-[protein] + ATP = O-phospho-L-seryl-[protein] + ADP + H(+). The catalysed reaction is L-threonyl-[protein] + ATP = O-phospho-L-threonyl-[protein] + ADP + H(+). Its activity is regulated as follows. In normal conditions, the protein kinase activity is inhibited; inhibition is relieved by various stress conditions. Inhibited by heme: in presence of heme, forms a disulfide-linked inactive homodimer. Heme depletion relieves inhibition and stimulates kinase activity by autophosphorylation. Inhibited by the heme metabolites biliverdin and bilirubin. Induced by oxidative stress generated by arsenite treatment. Binding of nitric oxide (NO) to the heme iron in the N-terminal heme-binding domain activates the kinase activity, while binding of carbon monoxide (CO) suppresses kinase activity. Protein kinase activity is also activated upon binding to DELE1 in response to various stress, triggering the integrated stress response (ISR): activated by full-length DELE1 in response to iron deficiency, while it is activated by the processed form of DELE1 (S-DELE1) in response to mitochondrial stress. Metabolic-stress sensing protein kinase that phosphorylates the alpha subunit of eukaryotic translation initiation factor 2 (EIF2S1/eIF-2-alpha) in response to various stress conditions. Key activator of the integrated stress response (ISR) required for adaptation to various stress, such as heme deficiency, oxidative stress, osmotic shock, mitochondrial dysfunction and heat shock. EIF2S1/eIF-2-alpha phosphorylation in response to stress converts EIF2S1/eIF-2-alpha in a global protein synthesis inhibitor, leading to a global attenuation of cap-dependent translation, while concomitantly initiating the preferential translation of ISR-specific mRNAs, such as the transcriptional activator ATF4, and hence allowing ATF4-mediated reprogramming. Acts as a key sensor of heme-deficiency: in normal conditions, binds hemin via a cysteine thiolate and histidine nitrogenous coordination, leading to inhibit the protein kinase activity. This binding occurs with moderate affinity, allowing it to sense the heme concentration within the cell: heme depletion relieves inhibition and stimulates kinase activity, activating the ISR. Thanks to this unique heme-sensing capacity, plays a crucial role to shut off protein synthesis during acute heme-deficient conditions. In red blood cells (RBCs), controls hemoglobin synthesis ensuring a coordinated regulation of the synthesis of its heme and globin moieties. It thereby plays an essential protective role for RBC survival in anemias of iron deficiency. Iron deficiency also triggers activation by full-length DELE1. Also activates the ISR in response to mitochondrial dysfunction: HRI/EIF2AK1 protein kinase activity is activated upon binding to the processed form of DELE1 (S-DELE1), thereby promoting the ATF4-mediated reprogramming. Also acts as an activator of mitophagy in response to mitochondrial damage: catalyzes phosphorylation of eIF-2-alpha (EIF2S1) following activation by S-DELE1, thereby promoting mitochondrial localization of EIF2S1, triggering PRKN-independent mitophagy. The chain is Eukaryotic translation initiation factor 2-alpha kinase 1 from Macaca fascicularis (Crab-eating macaque).